The primary structure comprises 192 residues: MAAHLCRGRGAVGRREMLRGSGKKPIQRLAKAPAATASSKTSEWRATTAYGFLPAGGDVRPHSPRYESQGVLSDPADLGERFAARDELAEEGKEERFAEPPDRRLGLDVKGAANDIGVEFIEDDPEAQVCIEAGPPLLDGRNFSRAASLLGLLGGDREKQNQVVIRSGKPHADGDWPILPPLYLSFSGLPRA.

A disordered region spans residues 17–73; that stretch reads MLRGSGKKPIQRLAKAPAATASSKTSEWRATTAYGFLPAGGDVRPHSPRYESQGVLS. Low complexity predominate over residues 30–41; the sequence is AKAPAATASSKT.

This is an uncharacterized protein from Sinorhizobium fredii (strain NBRC 101917 / NGR234).